We begin with the raw amino-acid sequence, 496 residues long: Probable malate:quinone oxidoreductase (496 aa).

It belongs to the MQO family. It depends on FAD as a cofactor.

It catalyses the reaction (S)-malate + a quinone = a quinol + oxaloacetate. The protein operates within carbohydrate metabolism; tricarboxylic acid cycle; oxaloacetate from (S)-malate (quinone route): step 1/1. This is Probable malate:quinone oxidoreductase from Prochlorococcus marinus (strain MIT 9313).